The following is a 740-amino-acid chain: Copalyl diphosphate synthase 2 (740 aa).

K154 provides a ligand contact to substrate. Residues D287 and D289 each contribute to the Mg(2+) site. The short motif at D287 to D290 is the DXDD motif element. K373 is a substrate binding site.

The protein belongs to the terpene synthase family. It depends on Mg(2+) as a cofactor.

The enzyme catalyses (2E,6E,10E)-geranylgeranyl diphosphate = (+)-copalyl diphosphate. It participates in secondary metabolite biosynthesis; terpenoid biosynthesis. In terms of biological role, monofunctional diterpene synthase converting geranylgeranyl diphosphate to copalyl diphosphate. The chain is Copalyl diphosphate synthase 2 (CPS2) from Selaginella moellendorffii (Spikemoss).